The primary structure comprises 367 residues: Glutamate 5-kinase (367 aa).

K10 contributes to the ATP binding site. 3 residues coordinate substrate: S50, D137, and N149. ATP contacts are provided by residues 169-170 (TD) and 211-217 (TGGMATK). The region spanning 275–353 (AGEITVDDGA…QQISEILGYE (79 aa)) is the PUA domain.

This sequence belongs to the glutamate 5-kinase family.

It localises to the cytoplasm. It catalyses the reaction L-glutamate + ATP = L-glutamyl 5-phosphate + ADP. The protein operates within amino-acid biosynthesis; L-proline biosynthesis; L-glutamate 5-semialdehyde from L-glutamate: step 1/2. Its function is as follows. Catalyzes the transfer of a phosphate group to glutamate to form L-glutamate 5-phosphate. This is Glutamate 5-kinase from Yersinia enterocolitica serotype O:8 / biotype 1B (strain NCTC 13174 / 8081).